The following is a 617-amino-acid chain: Elongation factor 4 (617 aa).

The tr-type G domain maps to 17 to 203; it reads ERIRNFCIIA…RVCELVPHPV (187 aa). GTP contacts are provided by residues 29-34 and 150-153; these read DHGKST and NKID.

This sequence belongs to the TRAFAC class translation factor GTPase superfamily. Classic translation factor GTPase family. LepA subfamily.

The protein resides in the cell membrane. The catalysed reaction is GTP + H2O = GDP + phosphate + H(+). Required for accurate and efficient protein synthesis under certain stress conditions. May act as a fidelity factor of the translation reaction, by catalyzing a one-codon backward translocation of tRNAs on improperly translocated ribosomes. Back-translocation proceeds from a post-translocation (POST) complex to a pre-translocation (PRE) complex, thus giving elongation factor G a second chance to translocate the tRNAs correctly. Binds to ribosomes in a GTP-dependent manner. The chain is Elongation factor 4 from Corynebacterium urealyticum (strain ATCC 43042 / DSM 7109).